We begin with the raw amino-acid sequence, 235 residues long: Carbohydrate deacetylase (235 aa).

Histidine 61 and histidine 124 together coordinate Mg(2+).

It belongs to the YdjC deacetylase family. Mg(2+) is required as a cofactor.

Its function is as follows. Probably catalyzes the deacetylation of acetylated carbohydrates an important step in the degradation of oligosaccharides. The sequence is that of Carbohydrate deacetylase from Bacillus cereus (strain B4264).